Reading from the N-terminus, the 411-residue chain is MAATEILNRADIVKAPQVRLAPQPEKPSLIGLLRDDIAKLLAEKGVPERQVKMRVSQLWHWLYVRGVSDFDEMSNVSKDMREMLKEHFTIARPDIVEEQVSGDGTRKWLLRFPPRGAGRPVEIETVYIPEEGRGTLCISSQVGCTLTCSFCHTGTQKLVRNLTAEEILSQLLLARDRLGDFPERDTPQGAIVPAEGRKITNIVMMGMGEPLYNFENVKTALLIASDGDGLSLSKRRITLSTSGIVPEIYRTGEEIGVMLAISLHAVRDDLRDMLVPINKKYPLKQLMEACRAYPGLSNARRITFEYVMLKDVNDSLEDAKELVKLLKGIPAKINLIPFNPWPGTNYQCSDWEQIEKFADFINQAGYASPIRTPRGRDILAACGQLKSESERMRKVDRLAFEAMMIANHGED.

E124 (proton acceptor) is an active-site residue. The 250-residue stretch at 130–379 folds into the Radical SAM core domain; sequence EEGRGTLCIS…IRTPRGRDIL (250 aa). C137 and C382 form a disulfide bridge. C144, C148, and C151 together coordinate [4Fe-4S] cluster. S-adenosyl-L-methionine-binding positions include 208–209, S240, 262–264, and N339; these read GE and SLH. Catalysis depends on C382, which acts as the S-methylcysteine intermediate.

This sequence belongs to the radical SAM superfamily. RlmN family. The cofactor is [4Fe-4S] cluster.

It localises to the cytoplasm. The enzyme catalyses adenosine(2503) in 23S rRNA + 2 reduced [2Fe-2S]-[ferredoxin] + 2 S-adenosyl-L-methionine = 2-methyladenosine(2503) in 23S rRNA + 5'-deoxyadenosine + L-methionine + 2 oxidized [2Fe-2S]-[ferredoxin] + S-adenosyl-L-homocysteine. It carries out the reaction adenosine(37) in tRNA + 2 reduced [2Fe-2S]-[ferredoxin] + 2 S-adenosyl-L-methionine = 2-methyladenosine(37) in tRNA + 5'-deoxyadenosine + L-methionine + 2 oxidized [2Fe-2S]-[ferredoxin] + S-adenosyl-L-homocysteine. Functionally, specifically methylates position 2 of adenine 2503 in 23S rRNA and position 2 of adenine 37 in tRNAs. m2A2503 modification seems to play a crucial role in the proofreading step occurring at the peptidyl transferase center and thus would serve to optimize ribosomal fidelity. This chain is Dual-specificity RNA methyltransferase RlmN, found in Rhizobium meliloti (strain 1021) (Ensifer meliloti).